A 503-amino-acid polypeptide reads, in one-letter code: UDP-N-acetylmuramoyl-L-alanyl-D-glutamate--2,6-diaminopimelate ligase (503 aa).

S32 serves as a coordination point for UDP-N-acetyl-alpha-D-muramoyl-L-alanyl-D-glutamate. Residue 117 to 123 participates in ATP binding; that stretch reads GTNGKTT. UDP-N-acetyl-alpha-D-muramoyl-L-alanyl-D-glutamate is bound by residues 159–160, S186, Q192, and R194; that span reads TT. K226 carries the post-translational modification N6-carboxylysine. Meso-2,6-diaminopimelate is bound by residues R396, 420 to 423, G471, and E475; that span reads DNPR. The Meso-diaminopimelate recognition motif signature appears at 420–423; that stretch reads DNPR.

Belongs to the MurCDEF family. MurE subfamily. The cofactor is Mg(2+). Post-translationally, carboxylation is probably crucial for Mg(2+) binding and, consequently, for the gamma-phosphate positioning of ATP.

It localises to the cytoplasm. It carries out the reaction UDP-N-acetyl-alpha-D-muramoyl-L-alanyl-D-glutamate + meso-2,6-diaminopimelate + ATP = UDP-N-acetyl-alpha-D-muramoyl-L-alanyl-gamma-D-glutamyl-meso-2,6-diaminopimelate + ADP + phosphate + H(+). It functions in the pathway cell wall biogenesis; peptidoglycan biosynthesis. Functionally, catalyzes the addition of meso-diaminopimelic acid to the nucleotide precursor UDP-N-acetylmuramoyl-L-alanyl-D-glutamate (UMAG) in the biosynthesis of bacterial cell-wall peptidoglycan. The polypeptide is UDP-N-acetylmuramoyl-L-alanyl-D-glutamate--2,6-diaminopimelate ligase (Prochlorococcus marinus (strain SARG / CCMP1375 / SS120)).